A 245-amino-acid polypeptide reads, in one-letter code: Lactate utilization protein A (245 aa).

It belongs to the LutA/YkgE family.

Functionally, is involved in L-lactate degradation and allows cells to grow with lactate as the sole carbon source. The chain is Lactate utilization protein A from Exiguobacterium sp. (strain ATCC BAA-1283 / AT1b).